The sequence spans 464 residues: Fumarate hydratase class II (464 aa).

Residues 97–99, 128–131, 138–140, and Thr-186 contribute to the substrate site; these read SGT, HPND, and SSN. The active-site Proton donor/acceptor is His-187. Ser-317 is an active-site residue. Substrate contacts are provided by residues Ser-318 and 323–325; that span reads KVN.

It belongs to the class-II fumarase/aspartase family. Fumarase subfamily. In terms of assembly, homotetramer.

The protein resides in the cytoplasm. It carries out the reaction (S)-malate = fumarate + H2O. Its pathway is carbohydrate metabolism; tricarboxylic acid cycle; (S)-malate from fumarate: step 1/1. In terms of biological role, involved in the TCA cycle. Catalyzes the stereospecific interconversion of fumarate to L-malate. This chain is Fumarate hydratase class II, found in Leptospira interrogans serogroup Icterohaemorrhagiae serovar copenhageni (strain Fiocruz L1-130).